A 614-amino-acid chain; its full sequence is 1-deoxy-D-xylulose-5-phosphate synthase (614 aa).

Thiamine diphosphate is bound by residues histidine 74 and 115-117 (AHS). Aspartate 146 lines the Mg(2+) pocket. Residues 147-148 (GA), asparagine 175, tyrosine 282, and glutamate 363 contribute to the thiamine diphosphate site. Residue asparagine 175 participates in Mg(2+) binding.

The protein belongs to the transketolase family. DXPS subfamily. In terms of assembly, homodimer. Mg(2+) serves as cofactor. Thiamine diphosphate is required as a cofactor.

It catalyses the reaction D-glyceraldehyde 3-phosphate + pyruvate + H(+) = 1-deoxy-D-xylulose 5-phosphate + CO2. The protein operates within metabolic intermediate biosynthesis; 1-deoxy-D-xylulose 5-phosphate biosynthesis; 1-deoxy-D-xylulose 5-phosphate from D-glyceraldehyde 3-phosphate and pyruvate: step 1/1. Its function is as follows. Catalyzes the acyloin condensation reaction between C atoms 2 and 3 of pyruvate and glyceraldehyde 3-phosphate to yield 1-deoxy-D-xylulose-5-phosphate (DXP). This Nitrosospira multiformis (strain ATCC 25196 / NCIMB 11849 / C 71) protein is 1-deoxy-D-xylulose-5-phosphate synthase.